The primary structure comprises 837 residues: Espin (837 aa).

ANK repeat units lie at residues 1 to 31 (MALE…GPSL), 35 to 66 (LDAL…AVSR), 69 to 99 (NGAT…RVQE), 103 to 132 (SGAT…ANSA), 137 to 167 (TGAL…GVNA), 171 to 201 (NGAT…DPHL), 205 to 235 (DGMT…SFEQ), 238 to 267 (DGAT…EISQ), and 270 to 299 (WGGT…GLDV). Phosphoserine is present on residues Ser337 and Ser341. Residues 339 to 348 (DPSMDLEAKQ) are compositionally biased toward basic and acidic residues. Disordered stretches follow at residues 339-459 (DPSM…VGLH), 477-712 (DSLK…PATL), 745-767 (KLQQ…EARL), and 785-816 (EREQ…TLGY). Residues 351-364 (SGMSSPNTTMSVQP) are compositionally biased toward polar residues. Low complexity predominate over residues 376–395 (LSNYDSCSSSHSSSKGQRST). Residues Ser400 and Ser401 each carry the phosphoserine modification. The span at 423-455 (SLPPPPPPSFPPPPPPGTQLPPPPPGYPAPNPP) shows a compositional bias: pro residues. A phosphoserine mark is found at Ser497, Ser504, and Ser531. A compositionally biased stretch (pro residues) spans 581–604 (LPPPPPPPPLPEALSSPPPAPPLP). Over residues 617-626 (SSSSTGSTKS) the composition is skewed to low complexity. Polar residues-rich tracts occupy residues 627 to 636 (FNMMSPTGDN) and 651 to 662 (PTPQSKGLTTVF). Ser631 is subject to Phosphoserine. The WH2 domain occupies 635–652 (DNSELLAEIKAGKSLKPT). Over residues 663 to 673 (SGSGQPASQPE) the composition is skewed to low complexity. Phosphoserine occurs at positions 670, 674, and 680. A coiled-coil region spans residues 738–814 (KRQVMVRKLQ…KEQSEKLRTL (77 aa)).

As to quaternary structure, monomer. Interacts with PFN2. Binds F-actin in a Ca(2+)-resistant fashion. Interacts (via N-terminal) with BAIAP2 (via SH3-domain). Interacts with MYO3A (via C-terminus). Interacts with MYO3B (via C-terminus). Expressed at high concentration in the microvillar parallel actin bundle (PAB) of hair cells stereocilia in the cochlea and vestibular system. Detected also at high levels of a number of other sensory cell types, including taste receptor cells, solitary chemoreceptor cells, vomeronasal sensory neurons and Merkel cells. Isoform 1 is detected in testis. Isoforms 2 is detected in small intestine and kidney (at protein level). Isoforms 3, 4, 6 and 8 are expressed in Purkinje cells dendritic spines.

It localises to the cytoplasm. The protein localises to the cytoskeleton. Its subcellular location is the cell projection. The protein resides in the stereocilium. It is found in the microvillus. It localises to the cell junction. The protein localises to the dendritic spine. In terms of biological role, multifunctional actin-bundling protein. Plays a major role in regulating the organization, dimension, dynamics and signaling capacities of the actin filament-rich microvilli in the mechanosensory and chemosensory cells. Required for the assembly and stabilization of the stereociliary parallel actin bundles. Plays a crucial role in the formation and maintenance of inner ear hair cell stereocilia. Involved in the elongation of actin in stereocilia. In extrastriolar hair cells, required for targeting MYO3B to stereocilia tips, and for regulation of stereocilia diameter and staircase formation. In Rattus norvegicus (Rat), this protein is Espin (Espn).